The following is a 230-amino-acid chain: PKHD-type hydroxylase Xfasm12_1709 (230 aa).

The 105-residue stretch at 78-182 folds into the Fe2OG dioxygenase domain; sequence RTLPPRFNRY…RIASFFWVQS (105 aa). 3 residues coordinate Fe cation: histidine 96, aspartate 98, and histidine 163. Arginine 173 serves as a coordination point for 2-oxoglutarate.

It depends on Fe(2+) as a cofactor. The cofactor is L-ascorbate.

This chain is PKHD-type hydroxylase Xfasm12_1709, found in Xylella fastidiosa (strain M12).